A 145-amino-acid polypeptide reads, in one-letter code: uncharacterized protein (145 aa).

The segment at Cys86 to Cys110 adopts a dksA C4-type zinc-finger fold.

This is an uncharacterized protein from Aquifex aeolicus (strain VF5).